Consider the following 516-residue polypeptide: Nucleolar complex protein 4 homolog (516 aa).

A run of 3 helical transmembrane segments spans residues 296–316 (SACDVGGAISLLALNGLFILI), 347–367 (FFHLADLFLSSSHLPAYLVAA), and 375–395 (LALTAPPEALLMVLPLICNLL).

This sequence belongs to the CBF/MAK21 family.

The protein localises to the nucleus membrane. The protein resides in the nucleus. Its subcellular location is the nucleolus. The sequence is that of Nucleolar complex protein 4 homolog (Noc4l) from Rattus norvegicus (Rat).